Reading from the N-terminus, the 478-residue chain is Cytochrome c-552 (478 aa).

The signal sequence occupies residues 1 to 26; that stretch reads MARKTLRARRFFSLIFPFFFITSVYA. Histidine 94 is a heme c binding site. 3 residues coordinate heme: cysteine 122, cysteine 125, and lysine 126. Residues cysteine 160, cysteine 163, histidine 164, cysteine 209, cysteine 212, and histidine 213 each contribute to the heme c site. Positions 215, 216, 261, and 263 each coordinate Ca(2+). Tyrosine 216 contributes to the substrate binding site. Position 264 (histidine 264) interacts with substrate. Heme c-binding residues include histidine 275, cysteine 282, cysteine 285, histidine 286, histidine 301, cysteine 314, cysteine 317, histidine 318, and histidine 393.

The protein belongs to the cytochrome c-552 family. Ca(2+) is required as a cofactor. Requires heme c as cofactor.

It localises to the periplasm. It carries out the reaction 6 Fe(III)-[cytochrome c] + NH4(+) + 2 H2O = 6 Fe(II)-[cytochrome c] + nitrite + 8 H(+). It functions in the pathway nitrogen metabolism; nitrate reduction (assimilation). Catalyzes the reduction of nitrite to ammonia, consuming six electrons in the process. The sequence is that of Cytochrome c-552 from Salmonella paratyphi C (strain RKS4594).